We begin with the raw amino-acid sequence, 185 residues long: Ribosome-recycling factor (185 aa).

This sequence belongs to the RRF family.

The protein localises to the cytoplasm. Functionally, responsible for the release of ribosomes from messenger RNA at the termination of protein biosynthesis. May increase the efficiency of translation by recycling ribosomes from one round of translation to another. This Clostridium perfringens (strain ATCC 13124 / DSM 756 / JCM 1290 / NCIMB 6125 / NCTC 8237 / Type A) protein is Ribosome-recycling factor.